The sequence spans 188 residues: Trafficking protein particle complex subunit 5 (188 aa).

A Phosphoserine modification is found at Ser-10.

This sequence belongs to the TRAPP small subunits family. BET3 subfamily. Component of the multisubunit TRAPP (transport protein particle) complex, which includes at least TRAPPC2, TRAPPC2L, TRAPPC3, TRAPPC3L, TRAPPC4, TRAPPC5, TRAPPC8, TRAPPC9, TRAPPC10, TRAPPC11 and TRAPPC12.

The protein resides in the golgi apparatus. It localises to the cis-Golgi network. Its subcellular location is the endoplasmic reticulum. In terms of biological role, may play a role in vesicular transport from endoplasmic reticulum to Golgi. This Bos taurus (Bovine) protein is Trafficking protein particle complex subunit 5 (TRAPPC5).